We begin with the raw amino-acid sequence, 290 residues long: Phosphoribosylaminoimidazole-succinocarboxamide synthase (290 aa).

The protein belongs to the SAICAR synthetase family.

It catalyses the reaction 5-amino-1-(5-phospho-D-ribosyl)imidazole-4-carboxylate + L-aspartate + ATP = (2S)-2-[5-amino-1-(5-phospho-beta-D-ribosyl)imidazole-4-carboxamido]succinate + ADP + phosphate + 2 H(+). The protein operates within purine metabolism; IMP biosynthesis via de novo pathway; 5-amino-1-(5-phospho-D-ribosyl)imidazole-4-carboxamide from 5-amino-1-(5-phospho-D-ribosyl)imidazole-4-carboxylate: step 1/2. This chain is Phosphoribosylaminoimidazole-succinocarboxamide synthase, found in Haemophilus influenzae (strain PittGG).